Here is a 145-residue protein sequence, read N- to C-terminus: Polytheonamide B (145 aa).

A propeptide spanning residues 1 to 96 (MADSDNTPTS…DDDLDQAAGG (96 aa)) is cleaved from the precursor. The residue at position 97 (T97) is a 2-oxo-5,5-dimethylhexanoate. I99 is modified (3-methylisoleucine). A 3-methylvaline modification is found at V101. 3-methyl-D-valine is present on V102. V103 is modified (3-methylvaline). A104 carries the D-alanine (Ala) modification. At V105 the chain carries 3-methylvaline. A 3-methyl-D-valine mark is found at V106 and V110. N4-methyl-D-asparagine is present on N112. Position 113 is a 3-hydroxyvaline (Thr) (T113). Residue V117 is modified to 3-methylvaline. Position 118 is an N4-methyl-D-asparagine (N118). (3S)-3-methylglutamine is present on Q119. At V120 the chain carries 3-hydroxy-D-valine. N124 bears the N4-methyl-D-asparagine mark. (3R)-N4-methyl-3-hydroxy-D-asparagine is present on N126. V127 carries the post-translational modification 3-methylvaline. V128 is subject to 3-hydroxy-D-valine. An N4-methyl-D-asparagine mark is found at N130 and N132. At N134 the chain carries (3R)-N4-methyl-3-hydroxy-D-asparagine. Residue N136 is modified to N4-methyl-D-asparagine. S138 is modified (D-serine (Ser)). A D-asparagine modification is found at N140. Position 141 is a 3,3-dimethylmethionine (M141). N142 is subject to D-asparagine. D-threonine is present on T144.

Post-translationally, epimerization of most, and perhaps all, L- to D-amino acids is catalyzed by PoyD, when PoyA and PoyD are coexpressed in E.coli. In terms of processing, N-methylations are catalyzed by PoyE, when PoyA and PoyE are coexpressed in E.coli. To obtain 2-oxo-5,5-dimethylhexanoate, Thr-97 is firstly dehydrated by PoyF. The second step possibly corresponds to methylation by PoyB/C, and the third step may be a cleavage by PoyH/J.

Antimicrobial peptide active against Gram-positive bacteria (MIC=4-&gt;125 ug/ml). May act by forming transmembrane ion channels, since the peptide rapidly depolarizes the bacterial cytoplasmic membrane, simultaneously decreasing the membrane potential and intracellular potassium contents. This chain is Polytheonamide B, found in Bacterium symbiont subsp. Theonella swinhoei (strain pTSMAC1).